The sequence spans 125 residues: Small ribosomal subunit protein uS12 (125 aa).

Residues 9 to 28 are disordered; that stretch reads RSERSKLKKKTKSPALKQCP. Aspartate 89 carries the post-translational modification 3-methylthioaspartic acid. Residues 104 to 125 form a disordered region; sequence AQGVKDRKQGRSKYGTKRPKKA. Residues 113 to 125 show a composition bias toward basic residues; that stretch reads GRSKYGTKRPKKA.

Belongs to the universal ribosomal protein uS12 family. Part of the 30S ribosomal subunit. Contacts proteins S8 and S17. May interact with IF1 in the 30S initiation complex.

In terms of biological role, with S4 and S5 plays an important role in translational accuracy. Its function is as follows. Interacts with and stabilizes bases of the 16S rRNA that are involved in tRNA selection in the A site and with the mRNA backbone. Located at the interface of the 30S and 50S subunits, it traverses the body of the 30S subunit contacting proteins on the other side and probably holding the rRNA structure together. The combined cluster of proteins S8, S12 and S17 appears to hold together the shoulder and platform of the 30S subunit. The polypeptide is Small ribosomal subunit protein uS12 (Rippkaea orientalis (strain PCC 8801 / RF-1) (Cyanothece sp. (strain PCC 8801))).